Consider the following 100-residue polypeptide: Small ribosomal subunit protein uS14 (100 aa).

This sequence belongs to the universal ribosomal protein uS14 family. As to quaternary structure, part of the 30S ribosomal subunit. Contacts proteins S3 and S10.

Binds 16S rRNA, required for the assembly of 30S particles and may also be responsible for determining the conformation of the 16S rRNA at the A site. The protein is Small ribosomal subunit protein uS14 of Prochlorococcus marinus (strain NATL1A).